The sequence spans 229 residues: NAD-dependent protein deacetylase (229 aa).

A Deacetylase sirtuin-type domain is found at 1 to 229 (MNKLNEALKK…SDAVKVFAEI (229 aa)). NAD(+) is bound by residues A20, R32, Q96, I98, D99, H114, T181, S182, N205, and V223. The nicotinamide site is built by I98 and D99. H114 acts as the Proton acceptor in catalysis.

This sequence belongs to the sirtuin family. Class U subfamily.

The protein resides in the cytoplasm. It catalyses the reaction N(6)-acetyl-L-lysyl-[protein] + NAD(+) + H2O = 2''-O-acetyl-ADP-D-ribose + nicotinamide + L-lysyl-[protein]. Its function is as follows. NAD-dependent protein deacetylase which modulates the activities of several enzymes which are inactive in their acetylated form. The chain is NAD-dependent protein deacetylase from Listeria monocytogenes serotype 4b (strain F2365).